The sequence spans 33 residues: Brevinin-2PTb (33 aa).

Cysteines 27 and 33 form a disulfide.

Expressed by the skin glands.

The protein localises to the secreted. Has antibacterial activity against the Gram-positive bacterium S.aureus ATCC 25923 (MIC=9 uM) and the Gram-negative bacterium E.coli ATCC 25726 (MIC=9 uM). This is Brevinin-2PTb from Pulchrana picturata (Malaysian fire frog).